The primary structure comprises 415 residues: Phosphoglycerate kinase (415 aa).

Substrate-binding positions include 28–30 (DLN), Arg44, 67–70 (HQGR), Arg124, and Arg164. ATP contacts are provided by residues Glu336 and 362–365 (GGHF).

Belongs to the phosphoglycerate kinase family.

It is found in the cytoplasm. The enzyme catalyses (2R)-3-phosphoglycerate + ATP = (2R)-3-phospho-glyceroyl phosphate + ADP. The protein operates within carbohydrate degradation; glycolysis; pyruvate from D-glyceraldehyde 3-phosphate: step 2/5. This chain is Phosphoglycerate kinase (pgk), found in Aeropyrum pernix (strain ATCC 700893 / DSM 11879 / JCM 9820 / NBRC 100138 / K1).